Reading from the N-terminus, the 365-residue chain is DNA replication and repair protein RecF (365 aa).

30–37 lines the ATP pocket; that stretch reads GLNAQGKT.

It belongs to the RecF family.

Its subcellular location is the cytoplasm. In terms of biological role, the RecF protein is involved in DNA metabolism; it is required for DNA replication and normal SOS inducibility. RecF binds preferentially to single-stranded, linear DNA. It also seems to bind ATP. The polypeptide is DNA replication and repair protein RecF (Chlamydia trachomatis serovar L2b (strain UCH-1/proctitis)).